A 182-amino-acid polypeptide reads, in one-letter code: ATP synthase subunit delta (182 aa).

This sequence belongs to the ATPase delta chain family. As to quaternary structure, F-type ATPases have 2 components, F(1) - the catalytic core - and F(0) - the membrane proton channel. F(1) has five subunits: alpha(3), beta(3), gamma(1), delta(1), epsilon(1). F(0) has three main subunits: a(1), b(2) and c(10-14). The alpha and beta chains form an alternating ring which encloses part of the gamma chain. F(1) is attached to F(0) by a central stalk formed by the gamma and epsilon chains, while a peripheral stalk is formed by the delta and b chains.

The protein localises to the cell inner membrane. Its function is as follows. F(1)F(0) ATP synthase produces ATP from ADP in the presence of a proton or sodium gradient. F-type ATPases consist of two structural domains, F(1) containing the extramembraneous catalytic core and F(0) containing the membrane proton channel, linked together by a central stalk and a peripheral stalk. During catalysis, ATP synthesis in the catalytic domain of F(1) is coupled via a rotary mechanism of the central stalk subunits to proton translocation. Functionally, this protein is part of the stalk that links CF(0) to CF(1). It either transmits conformational changes from CF(0) to CF(1) or is implicated in proton conduction. The sequence is that of ATP synthase subunit delta from Cytophaga hutchinsonii (strain ATCC 33406 / DSM 1761 / CIP 103989 / NBRC 15051 / NCIMB 9469 / D465).